The primary structure comprises 430 residues: Adenylosuccinate synthetase (430 aa).

Residues 12–18 and 40–42 each bind GTP; these read GDEGKGK and GHT. The active-site Proton acceptor is aspartate 13. Mg(2+)-binding residues include aspartate 13 and glycine 40. IMP is bound by residues 13–16, 38–41, threonine 128, arginine 142, glutamine 223, threonine 238, and arginine 302; these read DEGK and NAGH. Histidine 41 serves as the catalytic Proton donor. 298–304 is a binding site for substrate; that stretch reads TTTGRPR. Residues arginine 304, 330–332, and 412–414 each bind GTP; these read SID and SVG.

This sequence belongs to the adenylosuccinate synthetase family. As to quaternary structure, homodimer. It depends on Mg(2+) as a cofactor.

It localises to the cytoplasm. It catalyses the reaction IMP + L-aspartate + GTP = N(6)-(1,2-dicarboxyethyl)-AMP + GDP + phosphate + 2 H(+). Its pathway is purine metabolism; AMP biosynthesis via de novo pathway; AMP from IMP: step 1/2. Its function is as follows. Plays an important role in the de novo pathway of purine nucleotide biosynthesis. Catalyzes the first committed step in the biosynthesis of AMP from IMP. This chain is Adenylosuccinate synthetase, found in Enterococcus faecalis (strain ATCC 700802 / V583).